Here is a 576-residue protein sequence, read N- to C-terminus: MKASKYILPTEKENPADAVVASHRLMIRAGLVRKSSAGLYFYLPLGLKVLKKIEQIVREEMNSTGALEFDLPILTPSDFWEQSGRWSAMGKEMFRIQDRHDLSYALGPTHEESFSFLLKPLLKSYKDLPVNVYQIQTKFRDEIRPRFGVIRSREFIMKDAYSFHIDDSSLDDTYQAMRVAYRKIFDRCGLKTIPVQADSGSMGGSASEEFMVVSPIGEETLLLCNSCGYSSNSEKTPLILKKENSSAKFSEKKEISTPGKKTISEVSTLLGVSESETIKAVALKSEKKKILVFLRGDLELNLHKLHSLLKIADSEPMTDLEIRELGLIPGFISPIAPNDKIKVLYDRSLQKDFPYVVGSSKEDFHTQGFILEKEISGLPEFADVALAREGDLCPNCSFPLKAEKGIEVGHIFKLGDKYTKAFGIQVLDQNGKSKTLTMGCYGIGVNRTMATVIEQCNDEKGIFWPISIAPFEVSLVSIVKGEDQYFKIEEFYNVLMNEGIEVFWDDRDLGPGFKLKDSELIGFPIRITIGKKFFESGEISIYNRKKDQEDSFVFSGFDDLVARVESMRQELFTELR.

The protein belongs to the class-II aminoacyl-tRNA synthetase family. ProS type 1 subfamily. As to quaternary structure, homodimer.

The protein localises to the cytoplasm. The enzyme catalyses tRNA(Pro) + L-proline + ATP = L-prolyl-tRNA(Pro) + AMP + diphosphate. Functionally, catalyzes the attachment of proline to tRNA(Pro) in a two-step reaction: proline is first activated by ATP to form Pro-AMP and then transferred to the acceptor end of tRNA(Pro). As ProRS can inadvertently accommodate and process non-cognate amino acids such as alanine and cysteine, to avoid such errors it has two additional distinct editing activities against alanine. One activity is designated as 'pretransfer' editing and involves the tRNA(Pro)-independent hydrolysis of activated Ala-AMP. The other activity is designated 'posttransfer' editing and involves deacylation of mischarged Ala-tRNA(Pro). The misacylated Cys-tRNA(Pro) is not edited by ProRS. The sequence is that of Proline--tRNA ligase from Leptospira interrogans serogroup Icterohaemorrhagiae serovar Lai (strain 56601).